We begin with the raw amino-acid sequence, 192 residues long: Large ribosomal subunit protein uL5 (192 aa).

Belongs to the universal ribosomal protein uL5 family. In terms of assembly, part of the 50S ribosomal subunit; part of the 5S rRNA/L5/L18/L25 subcomplex. Contacts the 5S rRNA and the P site tRNA. Forms a bridge to the 30S subunit in the 70S ribosome.

This is one of the proteins that bind and probably mediate the attachment of the 5S RNA into the large ribosomal subunit, where it forms part of the central protuberance. In the 70S ribosome it contacts protein S13 of the 30S subunit (bridge B1b), connecting the 2 subunits; this bridge is implicated in subunit movement. Contacts the P site tRNA; the 5S rRNA and some of its associated proteins might help stabilize positioning of ribosome-bound tRNAs. In Sphingopyxis alaskensis (strain DSM 13593 / LMG 18877 / RB2256) (Sphingomonas alaskensis), this protein is Large ribosomal subunit protein uL5.